A 347-amino-acid polypeptide reads, in one-letter code: NADH-ubiquinone oxidoreductase chain 2 (347 aa).

10 consecutive transmembrane segments (helical) span residues 13–33, 55–75, 96–116, 122–142, 151–171, 178–198, 199–219, 237–257, 277–297, and 326–346; these read VFTG…WLGL, AAIK…MAIL, LMIV…FWVP, VPLT…ISIM, TNIL…GGLN, ILAY…PYNP, NITI…FLIL, LTWL…LPPL, IAPT…ARLI, and LPTL…ILSI.

Belongs to the complex I subunit 2 family. As to quaternary structure, core subunit of respiratory chain NADH dehydrogenase (Complex I) which is composed of 45 different subunits. Interacts with TMEM242.

Its subcellular location is the mitochondrion inner membrane. It carries out the reaction a ubiquinone + NADH + 5 H(+)(in) = a ubiquinol + NAD(+) + 4 H(+)(out). Core subunit of the mitochondrial membrane respiratory chain NADH dehydrogenase (Complex I) which catalyzes electron transfer from NADH through the respiratory chain, using ubiquinone as an electron acceptor. Essential for the catalytic activity and assembly of complex I. The chain is NADH-ubiquinone oxidoreductase chain 2 from Pongo pygmaeus (Bornean orangutan).